A 296-amino-acid chain; its full sequence is 4-diphosphocytidyl-2-C-methyl-D-erythritol kinase (296 aa).

Residue Lys13 is part of the active site. ATP is bound at residue 98–108 (PVAAGIGGGSA). The active site involves Asp140.

Belongs to the GHMP kinase family. IspE subfamily.

It catalyses the reaction 4-CDP-2-C-methyl-D-erythritol + ATP = 4-CDP-2-C-methyl-D-erythritol 2-phosphate + ADP + H(+). The protein operates within isoprenoid biosynthesis; isopentenyl diphosphate biosynthesis via DXP pathway; isopentenyl diphosphate from 1-deoxy-D-xylulose 5-phosphate: step 3/6. In terms of biological role, catalyzes the phosphorylation of the position 2 hydroxy group of 4-diphosphocytidyl-2C-methyl-D-erythritol. The protein is 4-diphosphocytidyl-2-C-methyl-D-erythritol kinase of Rhodopseudomonas palustris (strain HaA2).